A 329-amino-acid chain; its full sequence is Quinone oxidoreductase (329 aa).

Ala-2 is subject to N-acetylalanine. At Lys-23 the chain carries N6-acetyllysine. Residues Tyr-53, 158 to 161 (SGGV), Gly-181, His-200, Asn-229, 246 to 249 (VGCR), and 269 to 271 (VSL) each bind NADP(+). Lys-296 carries the post-translational modification N6-succinyllysine.

The protein belongs to the zinc-containing alcohol dehydrogenase family. Quinone oxidoreductase subfamily. In terms of assembly, homotetramer.

It localises to the cytoplasm. The enzyme catalyses 2 a quinone + NADPH + H(+) = 2 a 1,4-benzosemiquinone + NADP(+). Does not have alcohol dehydrogenase activity. Binds NADP and acts through a one-electron transfer process. Orthoquinones, such as 1,2-naphthoquinone or 9,10-phenanthrenequinone, are the best substrates (in vitro). May act in the detoxification of xenobiotics. Interacts with (AU)-rich elements (ARE) in the 3'-UTR of target mRNA species and enhances their stability. NADPH binding interferes with mRNA binding. This chain is Quinone oxidoreductase (Cryz), found in Rattus norvegicus (Rat).